Consider the following 209-residue polypeptide: Ribosomal RNA large subunit methyltransferase E (209 aa).

S-adenosyl-L-methionine-binding residues include Gly63, Trp65, Asp83, Asp99, and Asp124. Lys164 acts as the Proton acceptor in catalysis.

This sequence belongs to the class I-like SAM-binding methyltransferase superfamily. RNA methyltransferase RlmE family.

Its subcellular location is the cytoplasm. The enzyme catalyses uridine(2552) in 23S rRNA + S-adenosyl-L-methionine = 2'-O-methyluridine(2552) in 23S rRNA + S-adenosyl-L-homocysteine + H(+). Its function is as follows. Specifically methylates the uridine in position 2552 of 23S rRNA at the 2'-O position of the ribose in the fully assembled 50S ribosomal subunit. The sequence is that of Ribosomal RNA large subunit methyltransferase E from Shigella dysenteriae serotype 1 (strain Sd197).